Reading from the N-terminus, the 194-residue chain is Probable RNA polymerase sigma factor HI_1459 (194 aa).

Positions 45–58 (DLVQEAFLSAFKNL) match the Polymerase core binding motif. Residues 161-180 (SEEICQETHLTSSNLHTTLY) constitute a DNA-binding region (H-T-H motif).

Belongs to the sigma-70 factor family. ECF subfamily.

This chain is Probable RNA polymerase sigma factor HI_1459, found in Haemophilus influenzae (strain ATCC 51907 / DSM 11121 / KW20 / Rd).